Here is a 381-residue protein sequence, read N- to C-terminus: Diguanylate cyclase DosC (381 aa).

His-98 serves as a coordination point for heme. Positions 325–381 (TPLSVLIIDVDKFKEINDTWGHNTGDEILRKVSFLSQKRLVKSKILGAGSSRKLAVS) constitute a GGDEF domain. Mg(2+) is bound at residue Asp-333. Residues Asn-341 and Asp-350 each contribute to the substrate site.

Heme serves as cofactor. Mg(2+) is required as a cofactor.

It catalyses the reaction 2 GTP = 3',3'-c-di-GMP + 2 diphosphate. It functions in the pathway purine metabolism; 3',5'-cyclic di-GMP biosynthesis. In terms of biological role, globin-coupled heme-based oxygen sensor protein displaying diguanylate cyclase (DGC) activity in response to oxygen availability. Thus, catalyzes the synthesis of cyclic diguanylate (c-di-GMP) via the condensation of 2 GTP molecules. Cyclic-di-GMP is a second messenger which controls cell surface-associated traits in bacteria. This is Diguanylate cyclase DosC (dosC) from Shigella flexneri serotype 5b (strain 8401).